The primary structure comprises 406 residues: 4-hydroxy-3-methylbut-2-en-1-yl diphosphate synthase (ferredoxin) (406 aa).

[4Fe-4S] cluster-binding residues include Cys-315, Cys-318, Cys-349, and Glu-356.

It belongs to the IspG family. [4Fe-4S] cluster serves as cofactor.

It catalyses the reaction (2E)-4-hydroxy-3-methylbut-2-enyl diphosphate + 2 oxidized [2Fe-2S]-[ferredoxin] + H2O = 2-C-methyl-D-erythritol 2,4-cyclic diphosphate + 2 reduced [2Fe-2S]-[ferredoxin] + H(+). It functions in the pathway isoprenoid biosynthesis; isopentenyl diphosphate biosynthesis via DXP pathway; isopentenyl diphosphate from 1-deoxy-D-xylulose 5-phosphate: step 5/6. Converts 2C-methyl-D-erythritol 2,4-cyclodiphosphate (ME-2,4cPP) into 1-hydroxy-2-methyl-2-(E)-butenyl 4-diphosphate. In Gloeothece citriformis (strain PCC 7424) (Cyanothece sp. (strain PCC 7424)), this protein is 4-hydroxy-3-methylbut-2-en-1-yl diphosphate synthase (ferredoxin).